Reading from the N-terminus, the 190-residue chain is MSRRYTPLAWVLLALLGLGAAQDCGSIVSRGKWGALASKCSQRLRQPVRYVVVSHTAGSVCNTPASCQRQAQNVQHYHVRERGWCDVGYNFLIGEDGLVYEGRGWNTLGAHSGPTWNPIAIGISFMGNYMHRVPPASALRAAQSLLACGAARGYLTPNYEVKGHRDVQQTLSPGDELYKIIQQWPHYRRV.

The signal sequence occupies residues 1 to 21 (MSRRYTPLAWVLLALLGLGAA). At Gln22 the chain carries Pyrrolidone carboxylic acid. Disulfide bonds link Cys24-Cys148, Cys40-Cys85, and Cys61-Cys67. In terms of domain architecture, N-acetylmuramoyl-L-alanine amidase spans 46–174 (QPVRYVVVSH…RDVQQTLSPG (129 aa)).

This sequence belongs to the N-acetylmuramoyl-L-alanine amidase 2 family. As to quaternary structure, homodimer; disulfide-linked.

The protein resides in the secreted. It is found in the cytoplasmic granule. In terms of biological role, innate immunity protein that plays several important functions in antimicrobial and antitumor defense systems. Acts as a pattern receptor that binds to murein peptidoglycans (PGN) of Gram-positive bacteria and thus provides bactericidal activity. Forms an equimolar complex with heat shock protein HSPA1A and induces programmed cell death through apoptosis and necroptosis in tumor cell lines by activating the TNFR1 receptor on the target cell membrane. In addition, acts in complex with the Ca(2+)-binding protein S100A4 as a chemoattractant able to induce lymphocyte movement. Mechanistically, this complex acts as a ligand of the chemotactic receptors CCR5 and CXCR3 which are present on the cells of the immune system. Promotes also the activation of lymphocytes that become able to kill virus-infected cells as well as tumor cells by modulating the spectrum of their target-cell specificity. Induction of cytotoxicity on monocyte surface requires interaction with TREM1 receptor. The chain is Peptidoglycan recognition protein 1 (PGLYRP1) from Bos indicus (Zebu).